The following is a 272-amino-acid chain: Magnetosome protein MamQ 1 (272 aa).

Topologically, residues 1–46 (MALGDANVGSAPGVDFSALQRVKQSEELLAQLYVVEETPRRLGRGP) are cytoplasmic. Residues 47–67 (VHALMVISVLSVVAFIATLLM) traverse the membrane as a helical segment. Residues 68 to 272 (RYNTFVTMSE…PLNHAQDIKK (205 aa)) lie on the Lumenal side of the membrane.

Belongs to the LemA family.

It is found in the magnetosome membrane. Functionally, essential for magnetosome formation. Can be used to induce magnetosome formation. The chain is Magnetosome protein MamQ 1 (mamQ1) from Paramagnetospirillum magneticum (strain ATCC 700264 / AMB-1) (Magnetospirillum magneticum).